We begin with the raw amino-acid sequence, 462 residues long: MLDFAIFAVTFLLALVGAVLYLYPASRQASGIPGLTPTEEKDGNLPDIVNSGSLHEFLVNLHGRYGPVVSFWFGRRLVVSLGTADALKQHFNPNKTLDPFETMLKSLLGYRSGAGSGSEDHVRRRLYGDAVTAALQSNFPLLLKLSEELLDKWLSYPETQHIPLSQHMLGFALKFVTRMVLGDTFEGEQEVIRFQKIHGTVWSEIGKGFLDGSLDKNTTRKNQYQEALMQLEAILKKIIKERKGGDFSQHTFIDSLVQRNLNEQQILEDSVVFSLAGCIVTARLCTWAIHFLTTAEEVQKKLHKEVDHVLGKGPITSEKIEQLRYCQQVLCETVRTAKLTPVSAQLQDIEGKVGPFIIPKETLVLYALGVVLQDASTWPSPHKFDPDRFADEPVMKVFSSLGFSGTWECPELRFAYVVTTVLVSVLLKKLHLLAVDRQVFEMKYELVTSCREETWITVSERH.

The helical transmembrane segment at 4–24 (FAIFAVTFLLALVGAVLYLYP) threads the bilayer. C409 provides a ligand contact to heme.

It belongs to the cytochrome P450 family. It depends on heme as a cofactor.

Its subcellular location is the membrane. This chain is Cytochrome P450 20A1 (Cyp20a1), found in Rattus norvegicus (Rat).